The sequence spans 215 residues: Cytochrome b6 (215 aa).

The helical transmembrane segment at 32 to 52 threads the bilayer; that stretch reads IFYCLGGITLTCFLVQVATGF. Cys35 serves as a coordination point for heme c. Positions 86 and 100 each coordinate heme b. The next 3 helical transmembrane spans lie at 90-110, 116-136, and 186-206; these read ASMM…TGGF, LTWV…VTGY, and LHTF…FLMI. His187 and His202 together coordinate heme b.

Belongs to the cytochrome b family. PetB subfamily. As to quaternary structure, the 4 large subunits of the cytochrome b6-f complex are cytochrome b6, subunit IV (17 kDa polypeptide, PetD), cytochrome f and the Rieske protein, while the 4 small subunits are PetG, PetL, PetM and PetN. The complex functions as a dimer. Heme b is required as a cofactor. It depends on heme c as a cofactor.

Its subcellular location is the plastid. It is found in the chloroplast thylakoid membrane. Component of the cytochrome b6-f complex, which mediates electron transfer between photosystem II (PSII) and photosystem I (PSI), cyclic electron flow around PSI, and state transitions. In Pinus koraiensis (Korean pine), this protein is Cytochrome b6.